The following is a 51-amino-acid chain: Large ribosomal subunit protein eL39 (51 aa).

The protein belongs to the eukaryotic ribosomal protein eL39 family.

The polypeptide is Large ribosomal subunit protein eL39 (Methanococcoides burtonii (strain DSM 6242 / NBRC 107633 / OCM 468 / ACE-M)).